The sequence spans 74 residues: uncharacterized protein (74 aa).

This is an uncharacterized protein from Staphylococcus aureus.